We begin with the raw amino-acid sequence, 275 residues long: Formamidopyrimidine-DNA glycosylase (275 aa).

The active-site Schiff-base intermediate with DNA is the P2. E3 (proton donor) is an active-site residue. K58 serves as the catalytic Proton donor; for beta-elimination activity. The DNA site is built by H93, R111, and R156. Residues 241–275 form an FPG-type zinc finger; it reads FVYDRAGQPCRVCGTPVRQIVQGQRSTYFCPTCQR. The active-site Proton donor; for delta-elimination activity is the R265.

It belongs to the FPG family. Monomer. Zn(2+) is required as a cofactor.

The catalysed reaction is Hydrolysis of DNA containing ring-opened 7-methylguanine residues, releasing 2,6-diamino-4-hydroxy-5-(N-methyl)formamidopyrimidine.. It carries out the reaction 2'-deoxyribonucleotide-(2'-deoxyribose 5'-phosphate)-2'-deoxyribonucleotide-DNA = a 3'-end 2'-deoxyribonucleotide-(2,3-dehydro-2,3-deoxyribose 5'-phosphate)-DNA + a 5'-end 5'-phospho-2'-deoxyribonucleoside-DNA + H(+). Involved in base excision repair of DNA damaged by oxidation or by mutagenic agents. Acts as a DNA glycosylase that recognizes and removes damaged bases. Has a preference for oxidized purines, such as 7,8-dihydro-8-oxoguanine (8-oxoG). Has AP (apurinic/apyrimidinic) lyase activity and introduces nicks in the DNA strand. Cleaves the DNA backbone by beta-delta elimination to generate a single-strand break at the site of the removed base with both 3'- and 5'-phosphates. This is Formamidopyrimidine-DNA glycosylase from Burkholderia cenocepacia (strain HI2424).